A 336-amino-acid chain; its full sequence is F-box protein PP2-B1 (336 aa).

A disordered region spans residues 1–22 (MEQIHGGDSNSGGGGGGSSRND). Positions 9–18 (SNSGGGGGGS) are enriched in gly residues. The 47-residue stretch at 29–75 (ASRFDALPEDCISKVISHTSPRDACVVASVSKSVKSAAQSDLVWEMF) folds into the F-box domain.

As to quaternary structure, part of a SCF (ASK-cullin-F-box) protein ligase complex. Interacts with SKP1A/ASK1 and SPK1B/ASK2.

Its subcellular location is the nucleus. It functions in the pathway protein modification; protein ubiquitination. In terms of biological role, component of SCF(ASK-cullin-F-box) E3 ubiquitin ligase complexes, which may mediate the ubiquitination and subsequent proteasomal degradation of target proteins. In Arabidopsis thaliana (Mouse-ear cress), this protein is F-box protein PP2-B1 (PP2B1).